We begin with the raw amino-acid sequence, 137 residues long: MLQPKRTKFRKQQKGRNRGLAHRGSKVSFGEFALKATGRGRITARQIEAARRAMTRHVKRGGKIWIRVFPDKPITEKPLEVRQGKGKGNVEYWVCQIQPGKVLYEMEGVSEELAREAFTLAAAKLPVTTTFVKRSVM.

Positions 1-22 are disordered; it reads MLQPKRTKFRKQQKGRNRGLAH.

This sequence belongs to the universal ribosomal protein uL16 family. As to quaternary structure, part of the 50S ribosomal subunit.

In terms of biological role, binds 23S rRNA and is also seen to make contacts with the A and possibly P site tRNAs. In Saccharophagus degradans (strain 2-40 / ATCC 43961 / DSM 17024), this protein is Large ribosomal subunit protein uL16.